The sequence spans 389 residues: Alanine racemase (389 aa).

Lys46 acts as the Proton acceptor; specific for D-alanine in catalysis. N6-(pyridoxal phosphate)lysine is present on Lys46. Residue Arg144 coordinates substrate. Catalysis depends on Tyr275, which acts as the Proton acceptor; specific for L-alanine. Met323 contributes to the substrate binding site.

The protein belongs to the alanine racemase family. Requires pyridoxal 5'-phosphate as cofactor.

The enzyme catalyses L-alanine = D-alanine. Its pathway is amino-acid biosynthesis; D-alanine biosynthesis; D-alanine from L-alanine: step 1/1. Functionally, catalyzes the interconversion of L-alanine and D-alanine. May also act on other amino acids. This Mycolicibacterium smegmatis (strain ATCC 700084 / mc(2)155) (Mycobacterium smegmatis) protein is Alanine racemase (alr).